Here is a 308-residue protein sequence, read N- to C-terminus: Elongation factor Ts (308 aa).

The interval 80–83 (TDFV) is involved in Mg(2+) ion dislocation from EF-Tu.

Belongs to the EF-Ts family.

The protein resides in the cytoplasm. Associates with the EF-Tu.GDP complex and induces the exchange of GDP to GTP. It remains bound to the aminoacyl-tRNA.EF-Tu.GTP complex up to the GTP hydrolysis stage on the ribosome. The chain is Elongation factor Ts from Rhodopseudomonas palustris (strain BisB18).